We begin with the raw amino-acid sequence, 691 residues long: Elongation factor G (691 aa).

The tr-type G domain maps to 8 to 282 (ERVRNIGIAA…AVVDYLPAPV (275 aa)). GTP contacts are provided by residues 17–24 (AHIDAGKT), 81–85 (DTPGH), and 135–138 (NKMD).

The protein belongs to the TRAFAC class translation factor GTPase superfamily. Classic translation factor GTPase family. EF-G/EF-2 subfamily.

It is found in the cytoplasm. In terms of biological role, catalyzes the GTP-dependent ribosomal translocation step during translation elongation. During this step, the ribosome changes from the pre-translocational (PRE) to the post-translocational (POST) state as the newly formed A-site-bound peptidyl-tRNA and P-site-bound deacylated tRNA move to the P and E sites, respectively. Catalyzes the coordinated movement of the two tRNA molecules, the mRNA and conformational changes in the ribosome. The protein is Elongation factor G of Prochlorococcus marinus (strain MIT 9312).